Consider the following 149-residue polypeptide: Transcriptional repressor NrdR (149 aa).

A zinc finger lies at 3–34; sequence CPFCSENDTKVIDSRLVADGHQVRRRRQCLAC. The 91-residue stretch at 49–139 folds into the ATP-cone domain; sequence PKVIKSNGNR…VYRSFEDIRE (91 aa).

It belongs to the NrdR family. The cofactor is Zn(2+).

Functionally, negatively regulates transcription of bacterial ribonucleotide reductase nrd genes and operons by binding to NrdR-boxes. The protein is Transcriptional repressor NrdR of Vibrio atlanticus (strain LGP32) (Vibrio splendidus (strain Mel32)).